The following is a 38-amino-acid chain: Large ribosomal subunit protein bL36 (38 aa).

It belongs to the bacterial ribosomal protein bL36 family.

The polypeptide is Large ribosomal subunit protein bL36 (Flavobacterium johnsoniae (strain ATCC 17061 / DSM 2064 / JCM 8514 / BCRC 14874 / CCUG 350202 / NBRC 14942 / NCIMB 11054 / UW101) (Cytophaga johnsonae)).